Here is a 187-residue protein sequence, read N- to C-terminus: Phosphatidylethanolamine-binding protein 1 (187 aa).

Position 13 is a phosphoserine (Ser13). At Thr42 the chain carries Phosphothreonine. Ser52, Ser98, and Ser153 each carry phosphoserine. Positions 93–134 (KGNDISSGTVLSDYVGSGPPKGTGLHRYVWLVYEQSGPLKCD) are interaction with RAF1.

This sequence belongs to the phosphatidylethanolamine-binding protein family. In terms of assembly, has a tendency to form dimers by disulfide cross-linking. Interacts with RAF1 and this interaction is enhanced if RAF1 is phosphorylated on residues 'Ser-338', 'Ser-339', 'Tyr-340' and 'Tyr-341'. Interacts with ALOX15; in response to IL13/interleukin-13, prevents the interaction of PEBP1 with RAF1 to activate the ERK signaling cascade.

It is found in the cytoplasm. In terms of biological role, binds ATP, opioids and phosphatidylethanolamine. Has lower affinity for phosphatidylinositol and phosphatidylcholine. Serine protease inhibitor which inhibits thrombin, neuropsin and chymotrypsin but not trypsin, tissue type plasminogen activator and elastase. Involved in the positive regulation of epithelial cell migration. Inhibits the kinase activity of RAF1 by inhibiting its activation and by dissociating the RAF1/MEK complex and acting as a competitive inhibitor of MEK phosphorylation. HCNP may be involved in the function of the presynaptic cholinergic neurons of the central nervous system. HCNP increases the production of choline acetyltransferase but not acetylcholinesterase. Seems to be mediated by a specific receptor. The polypeptide is Phosphatidylethanolamine-binding protein 1 (PEBP1) (Canis lupus familiaris (Dog)).